We begin with the raw amino-acid sequence, 181 residues long: Ankyrin repeat-containing protein YGL242C (181 aa).

N-acetylmethionine is present on M1. ANK repeat units follow at residues 49-78 (LGNT…EIEI) and 85-120 (DGDT…DPRV). A disordered region spans residues 151–181 (IDSTNGSGDNNEDGEMIDDGPSDDDEEDDKK). Residues 160 to 181 (NNEDGEMIDDGPSDDDEEDDKK) show a composition bias toward acidic residues. S172 carries the phosphoserine modification.

The protein is Ankyrin repeat-containing protein YGL242C of Saccharomyces cerevisiae (strain ATCC 204508 / S288c) (Baker's yeast).